The following is a 194-amino-acid chain: dATP triphosphohydrolase (194 aa).

Arg-17 is a binding site for dATP. His-32, His-71, Asp-72, Glu-75, Asp-80, and Asp-123 together coordinate Co(2+).

This sequence belongs to the Caudovirales dATP triphosphohydrolase family. Co(2+) serves as cofactor.

It catalyses the reaction dATP + H2O = 2'-deoxyadenosine + triphosphate + H(+). The catalysed reaction is dADP + H2O = 2'-deoxyadenosine + diphosphate. It carries out the reaction dAMP + H2O = 2'-deoxyadenosine + phosphate. Catalyzes the hydrolysis of dATP, dADP and dAMP into dA. This step is essential for Z-genome synthesis (containing aminoadenine instead of adenine). Specifically removes dATP and its precursor dADP from the nucleotide pool of the host, preventing the incorporation of A into the phage genome and favoring the integration of the Z-base into the viral genome. The chain is dATP triphosphohydrolase (datZ) from Salmonella phage PMBT28.